A 943-amino-acid chain; its full sequence is Leucine--tRNA ligase (943 aa).

The 'HIGH' region signature appears at 40–51 (PYPSGAGLHVGH). The short motif at 717–721 (KMSKS) is the 'KMSKS' region element. K720 is an ATP binding site.

Belongs to the class-I aminoacyl-tRNA synthetase family.

The protein resides in the cytoplasm. It carries out the reaction tRNA(Leu) + L-leucine + ATP = L-leucyl-tRNA(Leu) + AMP + diphosphate. This Bacteroides fragilis (strain ATCC 25285 / DSM 2151 / CCUG 4856 / JCM 11019 / LMG 10263 / NCTC 9343 / Onslow / VPI 2553 / EN-2) protein is Leucine--tRNA ligase.